A 466-amino-acid chain; its full sequence is SVGFKAGVKDYKLTYYTPDYETKDTDILAAFRVTPQPGVPPEEAGAAVAAESSTGTWTTVWTXXXTSLDRYKGRCYHIEPVAGEENQYIAYVAXXLDLFEEGSVTNMFTSIVGNVFGFKALRALRLEDLRIPPDYVKTFQGPPHGIQVERDKLNKYGRPLLGCTIKPKLGLSAKNYGRAVYECLRGGLDFTKDDENVNSQPFMRWRDRFLFCAEAIYKAQAETGEIKGHYLNATAGTCEEMIKRAVFARELGVPIVMHDYLTGGFTANTSLAHYCRDNGLLLHIHRAMHAVIDRQKNHGIHFRVLAKALRMSGGDHIHSGTVVGKLEGEREITLGFVDLLRDDFIEKDRSRGIYFTQDWVSLPGVLPVASGGIHVWHMPALTEIFGDDSVLQFGGGTLGHPWGNAPGXVANRVALEACVQARNEGRDLAREGNEIIRKACKWSPELAAACEVWKEIKFEFEAMDTL.

At K5 the chain carries N6,N6,N6-trimethyllysine. Substrate-binding residues include N114 and T164. K166 functions as the Proton acceptor in the catalytic mechanism. K168 is a substrate binding site. The Mg(2+) site is built by K192, D194, and E195. K192 is subject to N6-carboxylysine. Catalysis depends on H285, which acts as the Proton acceptor. Substrate-binding residues include R286, H318, and S370.

It belongs to the RuBisCO large chain family. Type I subfamily. Heterohexadecamer of 8 large chains and 8 small chains; disulfide-linked. The disulfide link is formed within the large subunit homodimers. Mg(2+) serves as cofactor. Post-translationally, the disulfide bond which can form in the large chain dimeric partners within the hexadecamer appears to be associated with oxidative stress and protein turnover.

The protein localises to the plastid. It localises to the chloroplast. It catalyses the reaction 2 (2R)-3-phosphoglycerate + 2 H(+) = D-ribulose 1,5-bisphosphate + CO2 + H2O. The enzyme catalyses D-ribulose 1,5-bisphosphate + O2 = 2-phosphoglycolate + (2R)-3-phosphoglycerate + 2 H(+). RuBisCO catalyzes two reactions: the carboxylation of D-ribulose 1,5-bisphosphate, the primary event in carbon dioxide fixation, as well as the oxidative fragmentation of the pentose substrate in the photorespiration process. Both reactions occur simultaneously and in competition at the same active site. The protein is Ribulose bisphosphate carboxylase large chain of Averrhoa carambola (Star fruit).